Reading from the N-terminus, the 190-residue chain is Adenylate kinase (190 aa).

12–17 provides a ligand contact to ATP; the sequence is GSGKTT. The tract at residues 34–63 is NMP; the sequence is STGELLRAEVASGSERGKIIEGFTSKGNLV. AMP-binding positions include threonine 35, arginine 40, 61–63, 88–91, and glutamine 95; these read NLV and GYPR. The interval 130-136 is LID; the sequence is GRARGAD. Arginine 131 lines the ATP pocket. Residues arginine 133 and arginine 145 each contribute to the AMP site. Arginine 173 lines the ATP pocket.

Belongs to the adenylate kinase family. As to quaternary structure, monomer.

Its subcellular location is the cytoplasm. The enzyme catalyses AMP + ATP = 2 ADP. It participates in purine metabolism; AMP biosynthesis via salvage pathway; AMP from ADP: step 1/1. Its function is as follows. Catalyzes the reversible transfer of the terminal phosphate group between ATP and AMP. Plays an important role in cellular energy homeostasis and in adenine nucleotide metabolism. This is Adenylate kinase from Wolinella succinogenes (strain ATCC 29543 / DSM 1740 / CCUG 13145 / JCM 31913 / LMG 7466 / NCTC 11488 / FDC 602W) (Vibrio succinogenes).